Here is a 206-residue protein sequence, read N- to C-terminus: Pyridoxine/pyridoxamine 5'-phosphate oxidase (206 aa).

FMN-binding positions include 53–58 (RMVLLK), 68–69 (YT), K75, and Q97. K58 is a substrate binding site. Substrate contacts are provided by Y115, R119, and S123. Residues 132-133 (QS) and W177 each bind FMN. 183–185 (RLH) is a substrate binding site. Residue R187 coordinates FMN.

This sequence belongs to the pyridoxamine 5'-phosphate oxidase family. As to quaternary structure, homodimer. FMN is required as a cofactor.

It carries out the reaction pyridoxamine 5'-phosphate + O2 + H2O = pyridoxal 5'-phosphate + H2O2 + NH4(+). The enzyme catalyses pyridoxine 5'-phosphate + O2 = pyridoxal 5'-phosphate + H2O2. The protein operates within cofactor metabolism; pyridoxal 5'-phosphate salvage; pyridoxal 5'-phosphate from pyridoxamine 5'-phosphate: step 1/1. It functions in the pathway cofactor metabolism; pyridoxal 5'-phosphate salvage; pyridoxal 5'-phosphate from pyridoxine 5'-phosphate: step 1/1. Its function is as follows. Catalyzes the oxidation of either pyridoxine 5'-phosphate (PNP) or pyridoxamine 5'-phosphate (PMP) into pyridoxal 5'-phosphate (PLP). In Agrobacterium fabrum (strain C58 / ATCC 33970) (Agrobacterium tumefaciens (strain C58)), this protein is Pyridoxine/pyridoxamine 5'-phosphate oxidase.